The primary structure comprises 439 residues: UPF0489 protein C5orf22 homolog (439 aa).

Positions 163–219 (TTKLENGQSGAKIPKAAQTQDDMQSKADTPCTSSSQPPDGSAASGNISETAKKKADD) are disordered. The segment covering 179–211 (AQTQDDMQSKADTPCTSSSQPPDGSAASGNISE) has biased composition (polar residues).

The protein belongs to the UPF0489 family.

The sequence is that of UPF0489 protein C5orf22 homolog from Danio rerio (Zebrafish).